The sequence spans 147 residues: Protein SprT-like (147 aa).

Positions Ala9–Leu142 constitute a SprT-like domain. Position 65 (His65) interacts with Zn(2+). Glu66 is a catalytic residue. His69 provides a ligand contact to Zn(2+).

The protein belongs to the SprT family. The cofactor is Zn(2+).

It localises to the cytoplasm. This chain is Protein SprT-like (yciD), found in Lactococcus lactis subsp. lactis (strain IL1403) (Streptococcus lactis).